The following is a 53-amino-acid chain: Large ribosomal subunit protein eL40 (53 aa).

The protein belongs to the eukaryotic ribosomal protein eL40 family.

The protein is Large ribosomal subunit protein eL40 of Pyrobaculum aerophilum (strain ATCC 51768 / DSM 7523 / JCM 9630 / CIP 104966 / NBRC 100827 / IM2).